The following is a 160-amino-acid chain: Endoribonuclease YbeY (160 aa).

Positions 127, 131, and 137 each coordinate Zn(2+).

It belongs to the endoribonuclease YbeY family. Zn(2+) is required as a cofactor.

The protein resides in the cytoplasm. Functionally, single strand-specific metallo-endoribonuclease involved in late-stage 70S ribosome quality control and in maturation of the 3' terminus of the 16S rRNA. The chain is Endoribonuclease YbeY from Synechococcus sp. (strain RCC307).